Consider the following 390-residue polypeptide: Stearoyl-[acyl-carrier-protein] 9-desaturase, chloroplastic (390 aa).

A chloroplast-targeting transit peptide spans 1–27; it reads MALKLCFPPHKMPSFPDARIRSHRVFM. Fe cation contacts are provided by E132, E170, H173, E223, E256, and H259.

Belongs to the fatty acid desaturase type 2 family. Homodimer. The cofactor is Fe(2+).

Its subcellular location is the plastid. It is found in the chloroplast. It catalyses the reaction octadecanoyl-[ACP] + 2 reduced [2Fe-2S]-[ferredoxin] + O2 + 2 H(+) = (9Z)-octadecenoyl-[ACP] + 2 oxidized [2Fe-2S]-[ferredoxin] + 2 H2O. It participates in lipid metabolism; fatty acid metabolism. Its function is as follows. Converts stearoyl-ACP to oleoyl-ACP by introduction of a cis double bond between carbons 9 and 10 of the acyl chain. The polypeptide is Stearoyl-[acyl-carrier-protein] 9-desaturase, chloroplastic (Olea europaea (Common olive)).